The primary structure comprises 701 residues: Aryl hydrocarbon receptor repressor (701 aa).

The 54-residue stretch at 25-78 (TMGAEKSNPSKRHRDRLNTELDHLASLLPFSPDIISKLDKLSVLRLSVSYLRVK) folds into the bHLH domain. A PAS domain is found at 106 to 176 (PVQEGRLLLE…RQLHWAMDPP (71 aa)). Positions 409 to 430 (TEQRSQESTTKLTRQPSKNEPS) are enriched in polar residues. Positions 409–432 (TEQRSQESTTKLTRQPSKNEPSTC) are disordered. A needed for transcriptional repression region spans residues 555–701 (ASTTSCLWLG…SKGSDGIFLP (147 aa)). Residues Lys583 and Lys660 each participate in a glycyl lysine isopeptide (Lys-Gly) (interchain with G-Cter in SUMO2) cross-link.

In terms of assembly, interacts with ARNT, ANKRA2, HDAC4 and HDAC5. Interacts with ARNT; forms a heterodimer with ARNT.

It localises to the cytoplasm. It is found in the nucleus. In terms of biological role, mediates dioxin toxicity and is involved in regulation of cell growth and differentiation. Represses the transcription activity of AHR by competing with this transcription factor for heterodimer formation with the ARNT and subsequently binding to the xenobiotic response element (XRE) sequence present in the promoter regulatory region of variety of genes. Represses CYP1A1 by binding the XRE sequence and recruiting ANKRA2, HDAC4 and/or HDAC5. Autoregulates its expression by associating with its own XRE site. In Mus musculus (Mouse), this protein is Aryl hydrocarbon receptor repressor (Ahrr).